Consider the following 198-residue polypeptide: Nudix hydrolase 21, chloroplastic (198 aa).

A chloroplast-targeting transit peptide spans 1–37 (MISLFISNFSNLSNLSPTFDNMNMNIPSKKIVPVPTP). The region spanning 59 to 191 (GYRQVVGCVP…WMREALEAFI (133 aa)) is the Nudix hydrolase domain. A Nudix box motif is present at residues 98 to 119 (GGWEIDESIEEAALRETIEEAG). E113 and E117 together coordinate Mg(2+).

It belongs to the Nudix hydrolase family. It depends on Mg(2+) as a cofactor. Requires Mn(2+) as cofactor. As to expression, expressed in roots, leaves, stems and inflorescences.

Its subcellular location is the plastid. It localises to the chloroplast. Its function is as follows. Probably mediates the hydrolysis of some nucleoside diphosphate derivatives. The polypeptide is Nudix hydrolase 21, chloroplastic (NUDT21) (Arabidopsis thaliana (Mouse-ear cress)).